Here is a 660-residue protein sequence, read N- to C-terminus: Acetyl-coenzyme A synthetase (660 aa).

CoA is bound by residues 197–200 and threonine 317; that span reads RGGK. Residues 397–399, 421–426, aspartate 512, and arginine 528 each bind ATP; these read GEP and DTFWQT. CoA is bound at residue serine 536. An ATP-binding site is contributed by arginine 539. Mg(2+)-binding residues include valine 550 and valine 555. At lysine 625 the chain carries N6-acetyllysine.

This sequence belongs to the ATP-dependent AMP-binding enzyme family. Mg(2+) is required as a cofactor. In terms of processing, acetylated. Deacetylation by the SIR2-homolog deacetylase activates the enzyme.

The catalysed reaction is acetate + ATP + CoA = acetyl-CoA + AMP + diphosphate. In terms of biological role, catalyzes the conversion of acetate into acetyl-CoA (AcCoA), an essential intermediate at the junction of anabolic and catabolic pathways. AcsA undergoes a two-step reaction. In the first half reaction, AcsA combines acetate with ATP to form acetyl-adenylate (AcAMP) intermediate. In the second half reaction, it can then transfer the acetyl group from AcAMP to the sulfhydryl group of CoA, forming the product AcCoA. This chain is Acetyl-coenzyme A synthetase, found in Cupriavidus pinatubonensis (strain JMP 134 / LMG 1197) (Cupriavidus necator (strain JMP 134)).